We begin with the raw amino-acid sequence, 882 residues long: Alanine--tRNA ligase (882 aa).

Residues His570, His574, Cys672, and His676 each contribute to the Zn(2+) site.

It belongs to the class-II aminoacyl-tRNA synthetase family. It depends on Zn(2+) as a cofactor.

The protein resides in the cytoplasm. The catalysed reaction is tRNA(Ala) + L-alanine + ATP = L-alanyl-tRNA(Ala) + AMP + diphosphate. In terms of biological role, catalyzes the attachment of alanine to tRNA(Ala) in a two-step reaction: alanine is first activated by ATP to form Ala-AMP and then transferred to the acceptor end of tRNA(Ala). Also edits incorrectly charged Ser-tRNA(Ala) and Gly-tRNA(Ala) via its editing domain. In Xanthomonas euvesicatoria pv. vesicatoria (strain 85-10) (Xanthomonas campestris pv. vesicatoria), this protein is Alanine--tRNA ligase.